Reading from the N-terminus, the 57-residue chain is Small ribosomal subunit protein bS21 (57 aa).

Positions 32 to 57 (VRKRKHFEKPSVKRKKKSEAARKRKF) are disordered. The span at 33–57 (RKRKHFEKPSVKRKKKSEAARKRKF) shows a compositional bias: basic residues.

This sequence belongs to the bacterial ribosomal protein bS21 family.

In Shouchella clausii (strain KSM-K16) (Alkalihalobacillus clausii), this protein is Small ribosomal subunit protein bS21.